We begin with the raw amino-acid sequence, 112 residues long: Prothymosin alpha (112 aa).

At Met-1 the chain carries N-acetylmethionine. The interval 1–112 (MSDAAVDTSS…KKQKKTDEDD (112 aa)) is disordered. An N-acetylserine; in Prothymosin alpha, N-terminally processed modification is found at Ser-2. Position 2 is a phosphoserine (Ser-2). At Thr-8 the chain carries Phosphothreonine. Residues Ser-9 and Ser-10 each carry the phosphoserine modification. 2 positions are modified to phosphothreonine: Thr-13 and Thr-14. The span at 13–31 (TTKDLKEKKEVVEEAENGR) shows a compositional bias: basic and acidic residues. Lys-15 carries the N6-acetyllysine; alternate modification. Lys-15 carries the post-translational modification N6-succinyllysine; alternate. The span at 43–84 (ENGEQEADNEVDEEEEEGGEEEEEEEEGDGEEEDGDEDEEAE) shows a compositional bias: acidic residues. The span at 101-112 (ETKKQKKTDEDD) shows a compositional bias: basic and acidic residues. Phosphothreonine is present on Thr-102. Lys-103 carries the N6-acetyllysine; alternate modification. Lys-103 is covalently cross-linked (Glycyl lysine isopeptide (Lys-Gly) (interchain with G-Cter in SUMO2); alternate). Position 108 is a phosphothreonine (Thr-108).

This sequence belongs to the pro/parathymosin family. In terms of assembly, interacts with NUPR1; regulates apoptotic process. Covalently linked to a small RNA of about 20 nucleotides.

Its subcellular location is the nucleus. Its function is as follows. Prothymosin alpha may mediate immune function by conferring resistance to certain opportunistic infections. The polypeptide is Prothymosin alpha (Ptma) (Rattus norvegicus (Rat)).